A 445-amino-acid chain; its full sequence is RNA pseudouridine synthase 2, chloroplastic (445 aa).

The N-terminal 44 residues, 1 to 44 (MATTAAASPPAIATALSALLRRQRRRSSRCVGASHARCLAADAN), are a transit peptide targeting the chloroplast. The disordered stretch occupies residues 47–66 (AVAPSRRGGHGGTRLEEAVP). Residues 72 to 147 (SRIDAWISAR…IPLDIVYEDD (76 aa)) form the S4 RNA-binding domain. Residue Asp235 is part of the active site.

The protein belongs to the pseudouridine synthase RluA family.

Its subcellular location is the plastid. The protein resides in the chloroplast. The catalysed reaction is a uridine in RNA = a pseudouridine in RNA. The sequence is that of RNA pseudouridine synthase 2, chloroplastic from Oryza sativa subsp. japonica (Rice).